The following is a 112-amino-acid chain: uncharacterized protein (112 aa).

A signal peptide spans 1 to 21 (MKTLFTSVVLCGALVVSSSFA). HhH domains follow at residues 49–79 (DKLNINTATASEIQKSLTGIGAKKAEAIVQY) and 80–109 (REKHGNFXNAEQLLEVQGIGKATLEKNRDR).

This is an uncharacterized protein from Haemophilus influenzae (strain ATCC 51907 / DSM 11121 / KW20 / Rd).